The chain runs to 501 residues: Carotenoid cleavage oxygenase (501 aa).

The Fe cation site is built by H162, H211, H314, and H494.

This sequence belongs to the carotenoid oxygenase family. Fe(2+) is required as a cofactor.

Functionally, catalyzes the oxidative cleavage of several carotenoids and apocarotenoids in vitro. The sequence is that of Carotenoid cleavage oxygenase from Mycobacterium tuberculosis (strain CDC 1551 / Oshkosh).